The chain runs to 365 residues: MNQHITASQAIADPTHARPDASQDVVRLVDLKRRFGTTPAIDGISLTVRKGEILGIIGRSGAGKSTLIRCLNGLERPDSGEVFIEGREIGRLGERDLQPLRRRIGMIFQHFNLLSAKTVEDNVALPLKIEGRPKAERLARAAELLDLVGLSEKARAYPASLSGGQKQRVGIARALAARPALLLSDEATSALDPETTRSILALLKDINRQLGLTILLITHEMEVIRSIADRVAVIDAGRIVEQGPVWSVFADPQSDITKSLLGAIRPQLPAELAARLLPASGAETILRVDVAGDAASGPLLSDLATSVPGAFRLVHGGIDHIQQQPVGTLFLSIPGSDASHLAAVITFLKARQARVEVLGHVAHPV.

Residues 26 to 261 (VRLVDLKRRF…PQSDITKSLL (236 aa)) form the ABC transporter domain. 58 to 65 (GRSGAGKS) serves as a coordination point for ATP.

The protein belongs to the ABC transporter superfamily. Methionine importer (TC 3.A.1.24) family. The complex is composed of two ATP-binding proteins (MetN), two transmembrane proteins (MetI) and a solute-binding protein (MetQ).

It localises to the cell inner membrane. It catalyses the reaction L-methionine(out) + ATP + H2O = L-methionine(in) + ADP + phosphate + H(+). The catalysed reaction is D-methionine(out) + ATP + H2O = D-methionine(in) + ADP + phosphate + H(+). Its function is as follows. Part of the ABC transporter complex MetNIQ involved in methionine import. Responsible for energy coupling to the transport system. In Mesorhizobium japonicum (strain LMG 29417 / CECT 9101 / MAFF 303099) (Mesorhizobium loti (strain MAFF 303099)), this protein is Methionine import ATP-binding protein MetN.